We begin with the raw amino-acid sequence, 391 residues long: Pepsin B (391 aa).

The first 16 residues, 1 to 16 (MKCLILALICLQLSEG), serve as a signal peptide directing secretion. The propeptide at 17–60 (LVVRQILHKGKSIRERMEENGVLEDFLRYNKKADPAAKFLFNKD) is activation peptide. In terms of domain architecture, Peptidase A1 spans 75-388 (YFGEISIGTP…DMANNRVGFA (314 aa)). Asp-93 is a catalytic residue. 2 cysteine pairs are disulfide-bonded: Cys-106-Cys-111 and Cys-270-Cys-274. Asp-279 is an active-site residue. Cys-313 and Cys-346 are disulfide-bonded.

This sequence belongs to the peptidase A1 family.

Its subcellular location is the secreted. The enzyme catalyses Degradation of gelatin, little activity on hemoglobin. Specificity on B chain of insulin more restricted than that of pepsin A. Does not cleave 1-Phe-|-Val-2, 4-Gln-|-His-5 or 23-Gly-|-Phe-24.. Functionally, hydrolyzes various peptides including beta-endorphin, insulin B chain, dynorphin A, and neurokinin A, with high specificity for the cleavage of the Phe-Xaa bonds. In Monodelphis domestica (Gray short-tailed opossum), this protein is Pepsin B.